A 302-amino-acid chain; its full sequence is D-alanine--D-alanine ligase (302 aa).

One can recognise an ATP-grasp domain in the interval lysine 100–glutamine 294. Position 127 to 180 (glycine 127 to threonine 180) interacts with ATP. 3 residues coordinate Mg(2+): aspartate 248, glutamate 261, and asparagine 263.

It belongs to the D-alanine--D-alanine ligase family. Mg(2+) is required as a cofactor. Requires Mn(2+) as cofactor.

It is found in the cytoplasm. It catalyses the reaction 2 D-alanine + ATP = D-alanyl-D-alanine + ADP + phosphate + H(+). Its pathway is cell wall biogenesis; peptidoglycan biosynthesis. Cell wall formation. The polypeptide is D-alanine--D-alanine ligase (Lawsonia intracellularis (strain PHE/MN1-00)).